The chain runs to 152 residues: 3-hydroxyacyl-[acyl-carrier-protein] dehydratase FabZ (152 aa).

Histidine 58 is a catalytic residue.

It belongs to the thioester dehydratase family. FabZ subfamily.

The protein localises to the cytoplasm. It carries out the reaction a (3R)-hydroxyacyl-[ACP] = a (2E)-enoyl-[ACP] + H2O. Involved in unsaturated fatty acids biosynthesis. Catalyzes the dehydration of short chain beta-hydroxyacyl-ACPs and long chain saturated and unsaturated beta-hydroxyacyl-ACPs. In Prochlorococcus marinus (strain MIT 9312), this protein is 3-hydroxyacyl-[acyl-carrier-protein] dehydratase FabZ.